A 299-amino-acid chain; its full sequence is MLPDIQSTKGDGEGESLSWVGMEQIDLPIDIAGRPVSAKVNAGINLLSSPEAEKGIHMSRLYLLLDELTQGEITPALLQHVLKAFLVSHQGRSDEASIEISGDLLLSRKSLNSNHSGWKAYPLTLSAELRQSFTVTLKVGIPYSSTCPASAALSRHVAGLQFSKDFGNRIDRLPAAEIADWLVEKGMPATPHSQRSWAWVDIRLNPEAKSLPVLELIDYAEVALGTAVQTVVKRSDEQAFAVANGQNLMFCEDAARRLNNVFRCASFCEAFDIRVEHQESLHPHNAVARIHWKGSKNVT.

Belongs to the GTP cyclohydrolase IV family.

It carries out the reaction GTP + H2O = 7,8-dihydroneopterin 3'-triphosphate + formate + H(+). The protein operates within cofactor biosynthesis; 7,8-dihydroneopterin triphosphate biosynthesis; 7,8-dihydroneopterin triphosphate from GTP: step 1/1. Converts GTP to 7,8-dihydroneopterin triphosphate. The protein is GTP cyclohydrolase FolE2 of Klebsiella pneumoniae.